Here is a 63-residue protein sequence, read N- to C-terminus: Probable rubredoxin (63 aa).

The Rubredoxin-like domain maps to 11–62 (MKRYKCRVCGYIYDPEKGEPRTDTPPGTPFEDLPETWRCPSCGAKKKMFKPL). Residues cysteine 16, cysteine 19, cysteine 49, and cysteine 52 each coordinate Fe cation.

This sequence belongs to the rubredoxin family. The cofactor is Fe(3+).

In terms of biological role, rubredoxin is a small nonheme, iron protein lacking acid-labile sulfide. Its single Fe, chelated to 4 Cys, functions as an electron acceptor and may also stabilize the conformation of the molecule. The protein is Probable rubredoxin of Methanothermobacter thermautotrophicus (strain ATCC 29096 / DSM 1053 / JCM 10044 / NBRC 100330 / Delta H) (Methanobacterium thermoautotrophicum).